The sequence spans 146 residues: Snaclec agkicetin-C subunit beta (146 aa).

The N-terminal stretch at 1 to 23 (MGRFIFVSFGLLVVFLSLSGTGA) is a signal peptide. 3 disulfide bridges follow: Cys25-Cys36, Cys53-Cys142, and Cys119-Cys134. The 112-residue stretch at 32 to 143 (YEGNCYLVVK…CSRTQPFVCK (112 aa)) folds into the C-type lectin domain.

It belongs to the snaclec family. Heterodimer of subunits alpha and beta; disulfide-linked. In terms of tissue distribution, expressed by the venom gland.

It localises to the secreted. Functionally, is a potent glycoprotein Ibalpha (GP1BA) antagonist. Concentration-dependently inhibits botrocetin-, ristocetin- and low dose thrombin-induced platelet aggregation. Inhibits platelet adhesion only through inhibiting the vWF interaction with GP1BA, but has minimal effect on other platelet receptors, such as alpha-IIb/beta-3 (ITGA2B/ITGB3) or alpha-2/beta-1 (ITGA2/ITGB1). Causes an instant severe thrombocytopenia in rats and is not lethal to mice. This chain is Snaclec agkicetin-C subunit beta, found in Deinagkistrodon acutus (Hundred-pace snake).